The following is a 50-amino-acid chain: Metallothionein zym1 (50 aa).

12 residues coordinate Zn(2+): Cys-7, Cys-15, Cys-17, Cys-21, Cys-23, Cys-26, Cys-30, Cys-32, Cys-40, Cys-42, Cys-45, and Cys-47.

It belongs to the metallothionein superfamily.

The protein resides in the cytoplasm. It is found in the nucleus. Its function is as follows. Metallothionein involved in tolerance to zinc and cadmium. Binds four zinc ions. The protein is Metallothionein zym1 (zym1) of Schizosaccharomyces pombe (strain 972 / ATCC 24843) (Fission yeast).